The primary structure comprises 244 residues: Derlin-2.1 (244 aa).

The Cytoplasmic segment spans residues 1–21 (MAQAVEEWYKQMPIITRSYLT). Residues 22-42 (AAVVTTVGCSLEIISPYNLYL) traverse the membrane as a helical segment. Residues 43-96 (NPTLVVKQYQFWRLVTNFLYFRKMDLDFLFHMFFLARYCKLLEENSFRGKTADF) are Lumenal-facing. A helical membrane pass occupies residues 97–117 (LYMLLFGATVLTGIVLIGGMI). Topologically, residues 118–121 (PYLS) are cytoplasmic. Residues 122-142 (VSFSKIIFLSNSLTFMMVYVW) form a helical membrane-spanning segment. Topologically, residues 143-152 (SKQNPYIHMS) are lumenal. Residues 153–173 (FLGLFTFTAAYLPWVLLGFSI) form a helical membrane-spanning segment. The Cytoplasmic segment spans residues 174-244 (LVGASAWGDF…HAPFDEIHQD (71 aa)).

It belongs to the derlin family.

The protein localises to the endoplasmic reticulum membrane. May be involved in the degradation process of specific misfolded endoplasmic reticulum (ER) luminal proteins. The protein is Derlin-2.1 (DER2.1) of Arabidopsis thaliana (Mouse-ear cress).